The sequence spans 187 residues: Protein GrpE (187 aa).

A compositionally biased stretch (low complexity) spans 1–17 (MSNEEQQQPNPAAQAPE). The disordered stretch occupies residues 1–27 (MSNEEQQQPNPAAQAPEGAVTEGAAPE).

The protein belongs to the GrpE family. As to quaternary structure, homodimer.

It is found in the cytoplasm. Participates actively in the response to hyperosmotic and heat shock by preventing the aggregation of stress-denatured proteins, in association with DnaK and GrpE. It is the nucleotide exchange factor for DnaK and may function as a thermosensor. Unfolded proteins bind initially to DnaJ; upon interaction with the DnaJ-bound protein, DnaK hydrolyzes its bound ATP, resulting in the formation of a stable complex. GrpE releases ADP from DnaK; ATP binding to DnaK triggers the release of the substrate protein, thus completing the reaction cycle. Several rounds of ATP-dependent interactions between DnaJ, DnaK and GrpE are required for fully efficient folding. The protein is Protein GrpE of Thioalkalivibrio sulfidiphilus (strain HL-EbGR7).